A 192-amino-acid chain; its full sequence is Leucine-rich repeat-containing protein 51 (192 aa).

LRR repeat units lie at residues 50-71 (MTQS…NHAV), 80-101 (NLAW…LTTF), and 103-124 (NLSV…NKLA). The LRRCT domain maps to 137–175 (NPIEEEKGYRQYVLCTLPHITTFDFSGVTKADRTTAEVW).

Its subcellular location is the cytoplasm. This is Leucine-rich repeat-containing protein 51 from Bos taurus (Bovine).